A 137-amino-acid chain; its full sequence is Large ribosomal subunit protein uL16 (137 aa).

Belongs to the universal ribosomal protein uL16 family. As to quaternary structure, part of the 50S ribosomal subunit.

Its function is as follows. Binds 23S rRNA and is also seen to make contacts with the A and possibly P site tRNAs. This is Large ribosomal subunit protein uL16 from Paracoccus denitrificans (strain Pd 1222).